Consider the following 160-residue polypeptide: Cytochrome b6-f complex subunit 4 (160 aa).

3 consecutive transmembrane segments (helical) span residues 36-56 (LLYI…GLAV), 95-115 (LLGI…PFIE), and 131-151 (TVFL…ALPI).

This sequence belongs to the cytochrome b family. PetD subfamily. In terms of assembly, the 4 large subunits of the cytochrome b6-f complex are cytochrome b6, subunit IV (17 kDa polypeptide, PetD), cytochrome f and the Rieske protein, while the 4 small subunits are PetG, PetL, PetM and PetN. The complex functions as a dimer.

It is found in the cellular thylakoid membrane. Functionally, component of the cytochrome b6-f complex, which mediates electron transfer between photosystem II (PSII) and photosystem I (PSI), cyclic electron flow around PSI, and state transitions. The chain is Cytochrome b6-f complex subunit 4 from Parasynechococcus marenigrum (strain WH8102).